The chain runs to 231 residues: NADH-ubiquinone oxidoreductase chain 4 (231 aa).

6 helical membrane-spanning segments follow: residues 1–21 (PIAG…YGII), 34–54 (MFLP…LTCL), 63–85 (IAYS…TPWG), 89–111 (AMAL…NTTY), 118–138 (ILIL…WWLL), and 169–189 (TIIL…HMFL).

This sequence belongs to the complex I subunit 4 family.

The protein resides in the mitochondrion membrane. It catalyses the reaction a ubiquinone + NADH + 5 H(+)(in) = a ubiquinol + NAD(+) + 4 H(+)(out). Its function is as follows. Core subunit of the mitochondrial membrane respiratory chain NADH dehydrogenase (Complex I) that is believed to belong to the minimal assembly required for catalysis. Complex I functions in the transfer of electrons from NADH to the respiratory chain. The immediate electron acceptor for the enzyme is believed to be ubiquinone. This is NADH-ubiquinone oxidoreductase chain 4 (MT-ND4) from Trimeresurus cantori (Cantor's pit viper).